Reading from the N-terminus, the 312-residue chain is Lipoyl synthase (312 aa).

Positions 1–10 (MNEAPAEKQK) are enriched in basic and acidic residues. The tract at residues 1-20 (MNEAPAEKQKPQQGKRFSER) is disordered. [4Fe-4S] cluster-binding residues include cysteine 51, cysteine 56, cysteine 62, cysteine 77, cysteine 81, cysteine 84, and serine 290. The Radical SAM core domain maps to 63–280 (WSRKTATYLA…RSVGESLGLF (218 aa)).

The protein belongs to the radical SAM superfamily. Lipoyl synthase family. [4Fe-4S] cluster is required as a cofactor.

The protein localises to the cytoplasm. It catalyses the reaction [[Fe-S] cluster scaffold protein carrying a second [4Fe-4S](2+) cluster] + N(6)-octanoyl-L-lysyl-[protein] + 2 oxidized [2Fe-2S]-[ferredoxin] + 2 S-adenosyl-L-methionine + 4 H(+) = [[Fe-S] cluster scaffold protein] + N(6)-[(R)-dihydrolipoyl]-L-lysyl-[protein] + 4 Fe(3+) + 2 hydrogen sulfide + 2 5'-deoxyadenosine + 2 L-methionine + 2 reduced [2Fe-2S]-[ferredoxin]. It participates in protein modification; protein lipoylation via endogenous pathway; protein N(6)-(lipoyl)lysine from octanoyl-[acyl-carrier-protein]: step 2/2. Functionally, catalyzes the radical-mediated insertion of two sulfur atoms into the C-6 and C-8 positions of the octanoyl moiety bound to the lipoyl domains of lipoate-dependent enzymes, thereby converting the octanoylated domains into lipoylated derivatives. This Chlamydia felis (strain Fe/C-56) (Chlamydophila felis) protein is Lipoyl synthase.